The chain runs to 232 residues: Ribonuclease 3 (232 aa).

Residues 6 to 135 enclose the RNase III domain; the sequence is QDYLAKTYGI…FIGALYLDQG (130 aa). Residue Glu-48 coordinates Mg(2+). Residue Asp-52 is part of the active site. The Mg(2+) site is built by Asp-121 and Glu-124. Glu-124 is a catalytic residue. The DRBM domain maps to 161–230; sequence DAKTSLQEFL…AKHALEKLRM (70 aa).

Belongs to the ribonuclease III family. Homodimer. It depends on Mg(2+) as a cofactor.

Its subcellular location is the cytoplasm. It carries out the reaction Endonucleolytic cleavage to 5'-phosphomonoester.. In terms of biological role, digests double-stranded RNA. Involved in the processing of primary rRNA transcript to yield the immediate precursors to the large and small rRNAs (23S and 16S). Processes some mRNAs, and tRNAs when they are encoded in the rRNA operon. Processes pre-crRNA and tracrRNA of type II CRISPR loci if present in the organism. The chain is Ribonuclease 3 from Limosilactobacillus fermentum (strain NBRC 3956 / LMG 18251) (Lactobacillus fermentum).